A 443-amino-acid chain; its full sequence is Leucine-rich repeat-containing protein 17 (443 aa).

An N-terminal signal peptide occupies residues 1-15; it reads MRIVAILLLFCLCRA. The disordered stretch occupies residues 20 to 48; that stretch reads KSSPGVLRSQGNPSRSHGRGGRRGSSPVK. LRR repeat units lie at residues 84–105, 108–129, and 132–153; these read DLLH…MFAK, RLKS…AFFG, and KLTT…AFIY. Positions 165-216 constitute an LRRCT 1 domain; that stretch reads NPWHCTCELETLISMLQIPRNRNLGNYAKCGSPPALRNKKLLQLKPQELCDE. The LRRNT domain occupies 229–270; that stretch reads SGIPAVIRPEADSTLCHNYVFPIQTLDCKRKELKKVPSNIPP. 3 LRR repeats span residues 271–292, 295–316, and 319–342; these read DIVK…EFED, ELKK…AFLG, and HLEE…EDLY. One can recognise an LRRCT 2 domain in the interval 352-404; it reads NPWRCDYSIHYLYYWLKHHYNVHYNGLECKTPEEYKGWSVGKYVRSYYEECPK.

Expressed in osteoblasts, spleen, lung and heart.

It localises to the secreted. Its subcellular location is the extracellular space. Functionally, involved in bone homeostasis. Acts as a negative regulator of RANKL-induced osteoclast precursor differentiation from bone marrow precursors. In Mus musculus (Mouse), this protein is Leucine-rich repeat-containing protein 17 (Lrrc17).